Here is a 162-residue protein sequence, read N- to C-terminus: D-beta-D-heptose 1-phosphate adenylyltransferase (162 aa).

It catalyses the reaction D-glycero-beta-D-manno-heptose 1-phosphate + ATP + H(+) = ADP-D-glycero-beta-D-manno-heptose + diphosphate. It functions in the pathway nucleotide-sugar biosynthesis; ADP-L-glycero-beta-D-manno-heptose biosynthesis; ADP-L-glycero-beta-D-manno-heptose from D-glycero-beta-D-manno-heptose 7-phosphate: step 3/4. The protein operates within bacterial outer membrane biogenesis; LPS core biosynthesis. In terms of biological role, catalyzes the ADP transfer from ATP to D-glycero-beta-D-manno-heptose 1-phosphate, yielding ADP-D-glycero-beta-D-manno-heptose. Cannot use GTP, UTP, or CTP as substrate. Is not active against the alpha-anomer substrate. Is also able to catalyze the ADP transfer to beta-glucose 1-phosphate in vitro, yielding ADP-beta-glucose. This Bordetella bronchiseptica (strain ATCC BAA-588 / NCTC 13252 / RB50) (Alcaligenes bronchisepticus) protein is D-beta-D-heptose 1-phosphate adenylyltransferase.